A 467-amino-acid chain; its full sequence is Ribulose bisphosphate carboxylase large chain (467 aa).

Lysine 5 carries the post-translational modification N6,N6,N6-trimethyllysine. Substrate is bound by residues asparagine 114 and threonine 164. Lysine 166 functions as the Proton acceptor in the catalytic mechanism. Lysine 168 provides a ligand contact to substrate. Lysine 192, aspartate 194, and glutamate 195 together coordinate Mg(2+). Lysine 192 is subject to N6-carboxylysine. The Proton acceptor role is filled by histidine 285. Substrate is bound by residues arginine 286, histidine 318, and serine 370.

It belongs to the RuBisCO large chain family. Type I subfamily. Heterohexadecamer of 8 large chains and 8 small chains; disulfide-linked. The disulfide link is formed within the large subunit homodimers. Requires Mg(2+) as cofactor. The disulfide bond which can form in the large chain dimeric partners within the hexadecamer appears to be associated with oxidative stress and protein turnover.

The protein resides in the plastid. It localises to the chloroplast. It carries out the reaction 2 (2R)-3-phosphoglycerate + 2 H(+) = D-ribulose 1,5-bisphosphate + CO2 + H2O. The enzyme catalyses D-ribulose 1,5-bisphosphate + O2 = 2-phosphoglycolate + (2R)-3-phosphoglycerate + 2 H(+). Its function is as follows. RuBisCO catalyzes two reactions: the carboxylation of D-ribulose 1,5-bisphosphate, the primary event in carbon dioxide fixation, as well as the oxidative fragmentation of the pentose substrate in the photorespiration process. Both reactions occur simultaneously and in competition at the same active site. This Jasminum simplicifolium subsp. suavissimum (Native jasmine) protein is Ribulose bisphosphate carboxylase large chain.